The following is a 452-amino-acid chain: NADH-ubiquinone oxidoreductase chain 4 (452 aa).

The next 14 helical transmembrane spans lie at 7–27, 57–77, 95–115, 116–136, 145–165, 186–206, 218–238, 251–271, 278–298, 303–323, 336–356, 360–380, 386–406, and 428–448; these read VLMSLLLLPLIVNLYPWIIAL, MMSFTLSALTIWVTVMMILAS, VILLIILINCFLSPNLIMFYI, WFEASLIPTMVLIMTWGYQPE, MIYTVAASLPMLMVLCKIFIV, MALAWVLTLGGFLVKLPMFTV, PIAGSMILAAILLKLGGYGIL, TSSLLSSVALVGAVSTSLICL, SLIAYSSVGHMGLMVAGALMS, FQAALAMMIAHGLSSSALFVM, LFLMKGLLVLAPTLTMWWFLF, NMAAPPSINLLSEIMLITSIL, AFILLGLTSFFTAAYCLYMYT, and LTLMTMHLVPTILIIFKPELI.

Belongs to the complex I subunit 4 family.

The protein localises to the mitochondrion membrane. It carries out the reaction a ubiquinone + NADH + 5 H(+)(in) = a ubiquinol + NAD(+) + 4 H(+)(out). In terms of biological role, core subunit of the mitochondrial membrane respiratory chain NADH dehydrogenase (Complex I) that is believed to belong to the minimal assembly required for catalysis. Complex I functions in the transfer of electrons from NADH to the respiratory chain. The immediate electron acceptor for the enzyme is believed to be ubiquinone. In Lumbricus terrestris (Common earthworm), this protein is NADH-ubiquinone oxidoreductase chain 4 (ND4).